We begin with the raw amino-acid sequence, 595 residues long: Proline--tRNA ligase (595 aa).

The protein belongs to the class-II aminoacyl-tRNA synthetase family. ProS type 1 subfamily. In terms of assembly, homodimer.

It localises to the cytoplasm. It carries out the reaction tRNA(Pro) + L-proline + ATP = L-prolyl-tRNA(Pro) + AMP + diphosphate. Catalyzes the attachment of proline to tRNA(Pro) in a two-step reaction: proline is first activated by ATP to form Pro-AMP and then transferred to the acceptor end of tRNA(Pro). As ProRS can inadvertently accommodate and process non-cognate amino acids such as alanine and cysteine, to avoid such errors it has two additional distinct editing activities against alanine. One activity is designated as 'pretransfer' editing and involves the tRNA(Pro)-independent hydrolysis of activated Ala-AMP. The other activity is designated 'posttransfer' editing and involves deacylation of mischarged Ala-tRNA(Pro). The misacylated Cys-tRNA(Pro) is not edited by ProRS. This chain is Proline--tRNA ligase, found in Treponema denticola (strain ATCC 35405 / DSM 14222 / CIP 103919 / JCM 8153 / KCTC 15104).